The sequence spans 197 residues: dITP/XTP pyrophosphatase (197 aa).

Substrate is bound at residue 8 to 13 (TGNPGK). Mg(2+)-binding residues include glutamate 40 and aspartate 69. The active-site Proton acceptor is aspartate 69. Residues serine 70, 154-157 (FGYD), lysine 177, and 182-183 (HR) contribute to the substrate site.

Belongs to the HAM1 NTPase family. As to quaternary structure, homodimer. It depends on Mg(2+) as a cofactor.

The catalysed reaction is XTP + H2O = XMP + diphosphate + H(+). The enzyme catalyses dITP + H2O = dIMP + diphosphate + H(+). It catalyses the reaction ITP + H2O = IMP + diphosphate + H(+). Its function is as follows. Pyrophosphatase that catalyzes the hydrolysis of nucleoside triphosphates to their monophosphate derivatives, with a high preference for the non-canonical purine nucleotides XTP (xanthosine triphosphate), dITP (deoxyinosine triphosphate) and ITP. Seems to function as a house-cleaning enzyme that removes non-canonical purine nucleotides from the nucleotide pool, thus preventing their incorporation into DNA/RNA and avoiding chromosomal lesions. The sequence is that of dITP/XTP pyrophosphatase from Yersinia pseudotuberculosis serotype I (strain IP32953).